The following is a 687-amino-acid chain: Glycine--tRNA ligase beta subunit (687 aa).

It belongs to the class-II aminoacyl-tRNA synthetase family. Tetramer of two alpha and two beta subunits.

It is found in the cytoplasm. The enzyme catalyses tRNA(Gly) + glycine + ATP = glycyl-tRNA(Gly) + AMP + diphosphate. This Geobacter sp. (strain M21) protein is Glycine--tRNA ligase beta subunit.